A 541-amino-acid polypeptide reads, in one-letter code: MKTFTAALLVGTALAAVPQQQPLQTQVEDSAWAKPLEDLKDTIKSMGAEAKQAWDQLASAFPDALNEYTLFSAPKKHTRRPDSHWDHVVRGADVQGIWVDGVDGQKHREVDGKLENYDLRVKAVDPSKLGIDPGVKQFSGYLDDNENDKHLFYWFFESRNDPKNDPVVLWLNGGPGCSSLTGLFFELGPASIDKNLKVIHNPYSWNSNASVIFLDQPVNVGFSYSGSSVSDTIAAGKDVYALLTLFFKQFPQYAKQDFHIAGESYAGHYIPAFASEILSHKNRNINLKSVLIGNGLTDPLTQYPHYRPMACGEGGYPAVLDESSCRSMDNALPRCQSMIESCYSSESAWVCVPASIYCNNAMIGPYQRTGQNVYDVRTKCEDGSLCYTGLNYITQWLNQKPVMEALGAEVESYDSCNMDINRNFLFHGDWMKPYHRLVPGLIEKLPVLIYAGDADFICNWLGNKAWTETLEWSGRAEFASAEMKNLTIVDNKSKGKNIGQVKSHGNFTFMRLFGGGHMVPLDQPEASLEFFNRWLGGEWKA.

Residues 1–17 (MKTFTAALLVGTALAAV) form the signal peptide. Residues 18–122 (PQQQPLQTQV…KLENYDLRVK (105 aa)) constitute a propeptide that is removed on maturation. 5 disulfide bridges follow: Cys-177-Cys-416, Cys-311-Cys-325, Cys-335-Cys-358, Cys-342-Cys-351, and Cys-380-Cys-386. Asn-208 carries an N-linked (GlcNAc...) asparagine glycan. The active site involves Ser-264. Asp-455 is an active-site residue. 3 N-linked (GlcNAc...) asparagine glycosylation sites follow: Asn-485, Asn-491, and Asn-506. Residue His-517 is part of the active site.

This sequence belongs to the peptidase S10 family.

The protein localises to the vacuole. It catalyses the reaction Release of a C-terminal amino acid with broad specificity.. In terms of biological role, vacuolar carboxypeptidase involved in degradation of small peptides. Digests preferentially peptides containing an aliphatic or hydrophobic residue in P1' position, as well as methionine, leucine or phenylalanine in P1 position of ester substrate. The chain is Carboxypeptidase Y homolog A (cpyA) from Uncinocarpus reesii (strain UAMH 1704).